Reading from the N-terminus, the 174-residue chain is Large ribosomal subunit protein uL16 (174 aa).

Belongs to the universal ribosomal protein uL16 family.

The protein is Large ribosomal subunit protein uL16 of Archaeoglobus fulgidus (strain ATCC 49558 / DSM 4304 / JCM 9628 / NBRC 100126 / VC-16).